A 646-amino-acid chain; its full sequence is uncharacterized protein (646 aa).

Helical transmembrane passes span Ala20 to Phe40, Leu54 to Ile74, Leu115 to Ile135, Ala154 to Leu174, Thr203 to Ile223, Ile232 to Phe252, Leu285 to Phe305, Gly523 to Gly543, Ile582 to Ala602, and Phe613 to Val633.

It belongs to the ABC-4 integral membrane protein family.

It is found in the cell membrane. This is an uncharacterized protein from Bacillus subtilis (strain 168).